Consider the following 231-residue polypeptide: NKG2-C type II integral membrane protein (231 aa).

Over residues M1 to S12 the composition is skewed to polar residues. Residues M1–S32 are disordered. Topologically, residues M1–K70 are cytoplasmic. Residues L71 to L93 form a helical; Signal-anchor for type II membrane protein membrane-spanning segment. Topologically, residues I94–L231 are extracellular. N-linked (GlcNAc...) asparagine glycosylation occurs at N100. One can recognise a C-type lectin domain in the interval H116–H229. Intrachain disulfides connect C117–C128, C145–C227, and C206–C219. Residues N149 and N178 are each glycosylated (N-linked (GlcNAc...) asparagine).

In terms of assembly, heterodimer with KLRD1; disulfide-linked. KLRD1-KLRC2 receptor complex interacts with TYROBP homodimer; this interaction is necessary for the expression on the cell surface. KLRD1-KLRC2 receptor complex can bind with low affinity to HLA-E loaded with self-peptides derived from the signal sequence of classical MHC class Ia. As to expression, expressed in NK cell subsets, in particular in adaptive CD57-positive NK cells (at protein level). Expressed in terminally differentiated cytotoxic gamma-delta T cells (at protein level). Expressed in alpha-beta T cells subsets (at protein level). KLRD1-KLRC1 and KLRD1-KLRC2 are differentially expressed within NK and T cell populations, with only minor subsets expressing both receptor complexes (at protein level).

The protein resides in the cell membrane. Functionally, immune activating receptor involved in self-nonself discrimination. In complex with KLRD1 on cytotoxic lymphocyte subsets, recognizes non-classical major histocompatibility (MHC) class Ib HLA-E loaded with signal sequence-derived peptides from non-classical MHC class Ib HLA-G molecules, likely playing a role in the generation and effector functions of adaptive natural killer (NK) cells and in maternal-fetal tolerance during pregnancy. Regulates the effector functions of terminally differentiated cytotoxic lymphocyte subsets, and in particular may play a role in adaptive NK cell response to viral infection. Upon HLA-E-peptide binding, transmits intracellular signals via the adapter protein TYROBP/DAP12, triggering the phosphorylation of proximal signaling molecules and cell activation. The protein is NKG2-C type II integral membrane protein (KLRC2) of Homo sapiens (Human).